The chain runs to 1071 residues: MKLIYTEMSYSMTEILVNEARKAADQGYRVFYIAPNSLSFEKEREVLTLLPERGTFSIIVTRFVQMSRYFTVESSPSKQHLDDTTLAMIFYRALMQLKPEDLPSYGRLQNNSVFIEQLVELYKELKNAQLSVHDLTGLDHPQKQEDLIKIIELAETIMIQQDYNQDSPLQSFARAIKLGLLNNQLSKTVVVIDGFSRFSAEEDYLLSLLNNNCQEVITGSYVSQKAYQKSFIKGNIYEASLHFLQDLAQKYHIKPVFATSNQVFKPAFSRLTQLFEATHDFSQVDWQLQKNDLDHFSLWQCHHQKEEIEHVAKSIRQKLYEGYRYKDILVLLGDMDAYQLQIGPIFDKFEIPYYLGKAEPMAAHPLVQFIESLERSQRYNWRREDILNMLKSGLFGCFDDSDIDRFEEYTQFADIKGFTKFSKPFTINSSRQYPLDFLNEMRQDIVLPLQELFKSQKQLGASLVDKLILFLKKIRLAENMQGLAQSQLEVEKNEEVWKRFTDILTSFHHIFGQEKLRLSDCLALIKTGMKSAQYRVVPATLDVVTIKSYDLVQPHSKPFVYAIGLTQSHFPKQIHHSGLLSDQERARINEIRNYRHFDIASAENSKKNHQTALSLFNAATKELVLSVPTVINETFDDLSPYLKELINFGLPLLDKGKNYLSYDNSDIGNYKALLSQIIAINRQDLIEMSDQDKMFWTVVLRYLRKQLRKQQLELPTSDYRLSTKSLSKEVIEVCFPKGIPLKLSATALTVFYNNQYNYFLKYVLNLNKTESIHPDSRIHGQYLHRVFERLMKDHTQEPFDNKLKQAIYHTNQESFFQQVYQDNAEAEYSLAILEDIVRSTAPILQLNQNIKVIDQEKNFHLDMGNEILVHGIIDRIDQLSDGSLGVVDYKSSANQFDIGTFYNGLSPQLVTYLAALKQIAPHDINQLFGAMYLHLQDPKLDLVTFKQIDNTLVESIYKALTYKGIFSEVEKEHLSTGAYQTKNALYSNDELETLLNYNKYLYLKAVKHIKKGHFLINPYTSDGKTVQGDQLKAITRFEADLDMAQARRLVTLPAKEKKECFLTLMRKESHL.

The protein belongs to the helicase family. AddB/RexB type 2 subfamily. Heterodimer of AddA and RexB. The cofactor is Mg(2+).

In terms of biological role, the heterodimer acts as both an ATP-dependent DNA helicase and an ATP-dependent, dual-direction single-stranded exonuclease. Recognizes the chi site generating a DNA molecule suitable for the initiation of homologous recombination. This subunit has 5' -&gt; 3' nuclease activity but not helicase activity. This Streptococcus pyogenes serotype M6 (strain ATCC BAA-946 / MGAS10394) protein is ATP-dependent helicase/deoxyribonuclease subunit B.